We begin with the raw amino-acid sequence, 577 residues long: Arginine--tRNA ligase (577 aa).

The 'HIGH' region motif lies at 122-132 (PNVAKEMHVGH).

The protein belongs to the class-I aminoacyl-tRNA synthetase family. Monomer.

It localises to the cytoplasm. It catalyses the reaction tRNA(Arg) + L-arginine + ATP = L-arginyl-tRNA(Arg) + AMP + diphosphate. In Haemophilus influenzae (strain PittEE), this protein is Arginine--tRNA ligase.